Reading from the N-terminus, the 690-residue chain is Eukaryotic translation initiation factor 3 subunit B (690 aa).

The span at 1 to 11 shows a compositional bias: basic and acidic residues; that stretch reads MAKKKSEEHSG. Positions 1 to 36 are disordered; that stretch reads MAKKKSEEHSGADANDSDYTEEPNFDDPPNFVDNIS. Over residues 15 to 25 the composition is skewed to acidic residues; sequence NDSDYTEEPNF. The region spanning 57-141 is the RRM domain; the sequence is SVVVVDNMPK…YTFAVNLFTD (85 aa). WD repeat units lie at residues 207–246, 292–331, 334–369, 442–484, and 530–575; these read TRER…KIQK, GDGM…LLDL, IKIP…TLME, EIRE…KPSL, and PDHF…IRRT. Residues 614–645 adopt a coiled-coil conformation; that stretch reads QKDRLRLTRASKELLEKRSQLRETFMEYRNKR.

Belongs to the eIF-3 subunit B family. Component of the eukaryotic translation initiation factor 3 (eIF-3) complex. The eIF-3 complex interacts with pix. Interacts with mxt.

Its subcellular location is the cytoplasm. In terms of biological role, RNA-binding component of the eukaryotic translation initiation factor 3 (eIF-3) complex, which is involved in protein synthesis of a specialized repertoire of mRNAs and, together with other initiation factors, stimulates binding of mRNA and methionyl-tRNAi to the 40S ribosome. The eIF-3 complex specifically targets and initiates translation of a subset of mRNAs involved in cell proliferation. In Drosophila virilis (Fruit fly), this protein is Eukaryotic translation initiation factor 3 subunit B.